We begin with the raw amino-acid sequence, 131 residues long: Fumarate reductase subunit C (131 aa).

The next 3 helical transmembrane spans lie at 30–50 (EGTA…LFAL), 57–77 (WMGF…LITL), and 109–129 (IIKG…YVAL).

This sequence belongs to the FrdC family. In terms of assembly, part of an enzyme complex containing four subunits: a flavoprotein (FrdA), an iron-sulfur protein (FrdB), and two hydrophobic anchor proteins (FrdC and FrdD).

The protein resides in the cell inner membrane. Functionally, two distinct, membrane-bound, FAD-containing enzymes are responsible for the catalysis of fumarate and succinate interconversion; fumarate reductase is used in anaerobic growth, and succinate dehydrogenase is used in aerobic growth. Anchors the catalytic components of the fumarate reductase complex to the cell inner membrane, binds quinones. This Salmonella heidelberg (strain SL476) protein is Fumarate reductase subunit C.